The sequence spans 360 residues: Membrane-bound lytic murein transglycosylase C (360 aa).

The signal sequence occupies residues Met-1–Ser-16. Residue Cys-17 is the site of N-palmitoyl cysteine attachment. Cys-17 carries S-diacylglycerol cysteine lipidation.

Belongs to the transglycosylase Slt family.

It localises to the cell outer membrane. It catalyses the reaction Exolytic cleavage of the (1-&gt;4)-beta-glycosidic linkage between N-acetylmuramic acid (MurNAc) and N-acetylglucosamine (GlcNAc) residues in peptidoglycan, from either the reducing or the non-reducing ends of the peptidoglycan chains, with concomitant formation of a 1,6-anhydrobond in the MurNAc residue.. In terms of biological role, murein-degrading enzyme. May play a role in recycling of muropeptides during cell elongation and/or cell division. This Salmonella typhi protein is Membrane-bound lytic murein transglycosylase C.